The chain runs to 101 residues: MKTYLILATLALIFSAMLTNICAVAFEQPKYCTEAPGDGKCPGEVRPAISTANWTFSKSFGGCVAHRWGSCGNHSNVFPKCLSCMTTCDPENATTYCDGWN.

The N-terminal stretch at 1 to 23 is a signal peptide; that stretch reads MKTYLILATLALIFSAMLTNICA. Residues 32-88 enclose the BPTI/Kunitz inhibitor domain; that stretch reads CTEAPGDGKCPGEVRPAISTANWTFSKSFGGCVAHRWGSCGNHSNVFPKCLSCMTTC. Intrachain disulfides connect Cys-32-Cys-88, Cys-41-Cys-71, and Cys-63-Cys-84. N-linked (GlcNAc...) asparagine glycosylation is found at Asn-53, Asn-73, and Asn-92.

As to expression, expressed in female salivary gland and ovary.

The protein resides in the secreted. Its function is as follows. Anticoagulant protein that modulates blood feeding of ticks on vertebrate species. Delays normal clotting of host plasma. The protein is Kunitz-type anticoagulant protein HA11 of Hyalomma asiaticum (Tick).